Reading from the N-terminus, the 746-residue chain is Protein O-mannosyl-transferase 1 (746 aa).

7 consecutive transmembrane segments (helical) span residues 30-50 (PLVVTVDINLNLVALTGLGLL), 90-110 (FGHMLLALGGWLGGFDGNFLW), 121-141 (VPIWSLRLLPALAGALSVPMA), 144-164 (IVLELHFSHGAAIGAALLMLI), 176-196 (LLESILIFFNLLAVLSYLKFF), 228-248 (MGIFTYLLVLGIAAVHAWNLI), and 266-286 (IVALLVVPVFLYLLFFYVHLM). MIR domains follow at residues 318–381 (PLEV…VKDP), 392–449 (PRPV…LDIV), and 453–513 (SNRD…VEEH). N-linked (GlcNAc...) asparagine glycans are attached at residues asparagine 435, asparagine 471, and asparagine 539. 3 helical membrane passes run 597–617 (IVIWTSASLATVVYTLLFFWY), 636–656 (WVLAGALCTGGWALNYLPFFL), and 660–680 (VLFLYHYLPALTFQILLLPIV).

Belongs to the glycosyltransferase 39 family.

It localises to the endoplasmic reticulum membrane. The catalysed reaction is a di-trans,poly-cis-dolichyl beta-D-mannosyl phosphate + L-seryl-[protein] = 3-O-(alpha-D-mannosyl)-L-seryl-[protein] + a di-trans,poly-cis-dolichyl phosphate + H(+). It carries out the reaction a di-trans,poly-cis-dolichyl beta-D-mannosyl phosphate + L-threonyl-[protein] = 3-O-(alpha-D-mannosyl)-L-threonyl-[protein] + a di-trans,poly-cis-dolichyl phosphate + H(+). The protein operates within protein modification; protein glycosylation. Its function is as follows. Transfers mannosyl residues to the hydroxyl group of serine or threonine residues. Coexpression of both POMT1 and POMT2 is necessary for enzyme activity, expression of either POMT1 or POMT2 alone is insufficient. Essentially dedicated to O-mannosylation of alpha-DAG1 and few other proteins but not of cadherins and protocaherins. The sequence is that of Protein O-mannosyl-transferase 1 (Pomt1) from Mus musculus (Mouse).